The sequence spans 697 residues: SITS-binding protein (697 aa).

Residues 1-20 (MARRAKKMASNSGDSSPEPG) form a disordered region. Residues 2–29 (ARRAKKMASNSGDSSPEPGIKEINETWK) are Cytoplasmic-facing. Residues 30–50 (GAIACLGVALLFLMTIGVLYW) form a helical membrane-spanning segment. Residues Asn-112, Asn-134, Asn-162, Asn-386, Asn-405, and Asn-470 are each glycosylated (N-linked (GlcNAc...) asparagine). The next 2 membrane-spanning stretches (helical) occupy residues 503 to 521 (GLIP…FFIP) and 542 to 562 (WMQI…WVFG). Residue Asn-568 is glycosylated (N-linked (GlcNAc...) asparagine).

It belongs to the glycosyl hydrolase 31 family. In terms of assembly, homodimer; disulfide-linked. Electroplax tissue, brain (200-fold less), and heart (500-fold less).

The protein resides in the membrane. In terms of biological role, this glycoprotein is probably not a functional part of the chloride channel. The polypeptide is SITS-binding protein (Tetronarce californica (Pacific electric ray)).